The primary structure comprises 172 residues: MDNPRRIIIGIDPGSRITGYGIIWSQGSKQGCIAFGQIKTDNDSLNFRLHQIERELRDLILIHRPHEAAIEQVFTFHNHQSALKLGQARGAALVATAACALPVAEYSARQIKQAVVGYGAATKAQVQHMVHLLLQLEKAPPADAADALAIALCHATSSRLSEKLMQAKGTLT.

Active-site residues include Asp12, Glu71, and Asp143. Positions 12, 71, and 143 each coordinate Mg(2+).

It belongs to the RuvC family. As to quaternary structure, homodimer which binds Holliday junction (HJ) DNA. The HJ becomes 2-fold symmetrical on binding to RuvC with unstacked arms; it has a different conformation from HJ DNA in complex with RuvA. In the full resolvosome a probable DNA-RuvA(4)-RuvB(12)-RuvC(2) complex forms which resolves the HJ. It depends on Mg(2+) as a cofactor.

It localises to the cytoplasm. The enzyme catalyses Endonucleolytic cleavage at a junction such as a reciprocal single-stranded crossover between two homologous DNA duplexes (Holliday junction).. Its function is as follows. The RuvA-RuvB-RuvC complex processes Holliday junction (HJ) DNA during genetic recombination and DNA repair. Endonuclease that resolves HJ intermediates. Cleaves cruciform DNA by making single-stranded nicks across the HJ at symmetrical positions within the homologous arms, yielding a 5'-phosphate and a 3'-hydroxyl group; requires a central core of homology in the junction. The consensus cleavage sequence is 5'-(A/T)TT(C/G)-3'. Cleavage occurs on the 3'-side of the TT dinucleotide at the point of strand exchange. HJ branch migration catalyzed by RuvA-RuvB allows RuvC to scan DNA until it finds its consensus sequence, where it cleaves and resolves the cruciform DNA. The polypeptide is Crossover junction endodeoxyribonuclease RuvC (Coxiella burnetii (strain CbuK_Q154) (Coxiella burnetii (strain Q154))).